We begin with the raw amino-acid sequence, 104 residues long: Putative heat shock protein PS1 (104 aa).

N-linked (GlcNAc...) asparagine glycosylation is found at N11 and N18. N18 is an ATP binding site.

This sequence belongs to the heat shock protein 90 family. Homodimer.

The protein resides in the cytoplasm. Its function is as follows. Putative molecular chaperone that may promote the maturation, structural maintenance and proper regulation of specific target proteins. The polypeptide is Putative heat shock protein PS1 (Pinus strobus (Eastern white pine)).